Consider the following 149-residue polypeptide: 3-dehydroquinate dehydratase (149 aa).

Tyr-23 (proton acceptor) is an active-site residue. Substrate is bound by residues Asn-74, His-80, and Asp-87. The Proton donor role is filled by His-100. Residues 101 to 102 and Arg-111 contribute to the substrate site; that span reads LS.

The protein belongs to the type-II 3-dehydroquinase family. As to quaternary structure, homododecamer.

It carries out the reaction 3-dehydroquinate = 3-dehydroshikimate + H2O. The protein operates within metabolic intermediate biosynthesis; chorismate biosynthesis; chorismate from D-erythrose 4-phosphate and phosphoenolpyruvate: step 3/7. Its function is as follows. Catalyzes a trans-dehydration via an enolate intermediate. The protein is 3-dehydroquinate dehydratase of Ruegeria pomeroyi (strain ATCC 700808 / DSM 15171 / DSS-3) (Silicibacter pomeroyi).